Reading from the N-terminus, the 688-residue chain is MTHKQRAIFEPALVRTALLDAVKKLDPRVQWRNPVMFVVYLGSWLTTLIWLAILSGHTTGSAMFTGSIALWLWFTVLFANMAEALAEGRSKAQAASLRGVKKTSWAKKLSEARVDAPQEKVSADSLRKGDLVLIEAGDTVPCDGEVLEGGASVDESAITGESAPVIRESGGDFSSVTGGTRVLSDWLVVECRVNPGETFLDRMIAMVEGAKRRKTPNEVALTILLVALTIVFLLATATLYPFSVFSVEASQAGSPVTITVLVALLVCLIPTTIGGLLSAIGVAGMSRMLGANVIATSGRAVEAAGDVDVLLLDKTGTITLGNRQASEFLPAPGVTEQQLADAAQLSSLADETPEGRSIVVLAKQRFNLRERDLHSLNATFIPFSAQTRMSGVNVQERMIRKGAVDAIRRHVESNQGHFPPAVDDLVASVARTGGTPLVVAEGSRVLGVVALKDIVKGGIKERFAELRKMGIKTVMITGDNRLTAAAIAAEAGVDDFLAEATPEAKLALIRQYQAEGRLVAMTGDGTNDAPALAQADVAVAMNSGTQAAKEAGNMVDLDSNPTKLIEVVHIGKQMLMTRGSLTTFSIANDVAKYFAIIPAAFAATYPQLNALNIMQLHSPSSAILSAVIFNALVIVFLIPLALKGVSYKAMSAAALLRRNLWIYGLGGLLVPFVGIKLIDLLLTALNMG.

The next 4 membrane-spanning stretches (helical) occupy residues 34-54 (PVMFVVYLGSWLTTLIWLAIL), 62-82 (AMFTGSIALWLWFTVLFANMA), 219-239 (VALTILLVALTIVFLLATATL), and 260-280 (VLVALLVCLIPTTIGGLLSAI). The 4-aspartylphosphate intermediate role is filled by aspartate 313. ATP is bound by residues aspartate 350, glutamate 354, 383 to 390 (FSAQTRMS), and lysine 401. Mg(2+) is bound by residues aspartate 524 and aspartate 528. Transmembrane regions (helical) follow at residues 594–614 (FAIIPAAFAATYPQLNALNIM), 622–642 (AILSAVIFNALVIVFLIPLAL), and 662–682 (IYGLGGLLVPFVGIKLIDLLL).

This sequence belongs to the cation transport ATPase (P-type) (TC 3.A.3) family. Type IA subfamily. The system is composed of three essential subunits: KdpA, KdpB and KdpC.

It localises to the cell inner membrane. It catalyses the reaction K(+)(out) + ATP + H2O = K(+)(in) + ADP + phosphate + H(+). Part of the high-affinity ATP-driven potassium transport (or Kdp) system, which catalyzes the hydrolysis of ATP coupled with the electrogenic transport of potassium into the cytoplasm. This subunit is responsible for energy coupling to the transport system and for the release of the potassium ions to the cytoplasm. This Yersinia pseudotuberculosis serotype I (strain IP32953) protein is Potassium-transporting ATPase ATP-binding subunit.